The chain runs to 136 residues: Large-conductance mechanosensitive channel (136 aa).

Helical transmembrane passes span alanine 9–phenylalanine 29 and isoleucine 79–isoleucine 99.

It belongs to the MscL family. As to quaternary structure, homopentamer.

It is found in the cell inner membrane. Channel that opens in response to stretch forces in the membrane lipid bilayer. May participate in the regulation of osmotic pressure changes within the cell. The sequence is that of Large-conductance mechanosensitive channel from Shewanella sp. (strain ANA-3).